Reading from the N-terminus, the 432-residue chain is Adenosylhomocysteinase (432 aa).

Ser-2 is modified (N-acetylserine). Substrate-binding residues include Thr-57, Asp-131, and Glu-156. 157-159 (TTT) is a binding site for NAD(+). Phosphoserine is present on Ser-183. Residues Lys-186 and Asp-190 each coordinate substrate. Lys-186 bears the N6-(2-hydroxyisobutyryl)lysine mark. Tyr-193 is modified (phosphotyrosine). NAD(+) contacts are provided by residues 222–227 (GDVGKG), Glu-243, Asn-248, 299–301 (IGH), Asn-346, and His-353.

It belongs to the adenosylhomocysteinase family. In terms of assembly, homotetramer. Interaction with AHCYL1. NAD(+) serves as cofactor.

It localises to the cytoplasm. The protein resides in the melanosome. Its subcellular location is the nucleus. The protein localises to the endoplasmic reticulum. The enzyme catalyses S-adenosyl-L-homocysteine + H2O = L-homocysteine + adenosine. It participates in amino-acid biosynthesis; L-homocysteine biosynthesis; L-homocysteine from S-adenosyl-L-homocysteine: step 1/1. Functionally, catalyzes the hydrolysis of S-adenosyl-L-homocysteine to form adenosine and homocysteine. Binds copper ions. This chain is Adenosylhomocysteinase (AHCY), found in Homo sapiens (Human).